The primary structure comprises 195 residues: Flavin prenyltransferase UbiX (195 aa).

FMN-binding positions include 17-19 (GGS), S43, 94-97 (SAGT), and R129. Dimethylallyl phosphate-binding residues include Y159 and R175.

This sequence belongs to the UbiX/PAD1 family.

It carries out the reaction dimethylallyl phosphate + FMNH2 = prenylated FMNH2 + phosphate. Its function is as follows. Flavin prenyltransferase that catalyzes the synthesis of the prenylated FMN cofactor (prenyl-FMN) for 4-hydroxy-3-polyprenylbenzoic acid decarboxylase UbiD. The prenyltransferase is metal-independent and links a dimethylallyl moiety from dimethylallyl monophosphate (DMAP) to the flavin N5 and C6 atoms of FMN. In Deinococcus radiodurans (strain ATCC 13939 / DSM 20539 / JCM 16871 / CCUG 27074 / LMG 4051 / NBRC 15346 / NCIMB 9279 / VKM B-1422 / R1), this protein is Flavin prenyltransferase UbiX.